We begin with the raw amino-acid sequence, 72 residues long: Protein kish-A (72 aa).

A signal peptide spans 1–26 (MSAIFNFQSLLTVILLLICTCAYIRS). At 27-53 (LAPSLLDKNKTGLLGIFWKCARIGERK) the chain is on the extracellular side. Asn35 carries an N-linked (GlcNAc...) asparagine glycan. A helical membrane pass occupies residues 54-71 (SPYVAVCCVVMAFSILFV). Residue Gln72 is a topological domain, cytoplasmic.

This sequence belongs to the KISH family.

Its subcellular location is the golgi apparatus membrane. Functionally, involved in the early part of the secretory pathway. In Gallus gallus (Chicken), this protein is Protein kish-A (TMEM167A).